A 52-amino-acid polypeptide reads, in one-letter code: Ribosome modulation factor (52 aa).

The protein belongs to the ribosome modulation factor family.

The protein localises to the cytoplasm. Functionally, during stationary phase, converts 70S ribosomes to an inactive dimeric form (100S ribosomes). In Xenorhabdus nematophila (strain ATCC 19061 / DSM 3370 / CCUG 14189 / LMG 1036 / NCIMB 9965 / AN6), this protein is Ribosome modulation factor.